A 376-amino-acid polypeptide reads, in one-letter code: Erythronate-4-phosphate dehydrogenase (376 aa).

Substrate-binding residues include Ser-45 and Thr-67. Asp-147 provides a ligand contact to NAD(+). Arg-209 is a catalytic residue. Residue Asp-233 participates in NAD(+) binding. Glu-238 is a catalytic residue. The active-site Proton donor is His-255. Gly-258 contacts NAD(+). Position 259 (Tyr-259) interacts with substrate.

It belongs to the D-isomer specific 2-hydroxyacid dehydrogenase family. PdxB subfamily. As to quaternary structure, homodimer.

It localises to the cytoplasm. The catalysed reaction is 4-phospho-D-erythronate + NAD(+) = (R)-3-hydroxy-2-oxo-4-phosphooxybutanoate + NADH + H(+). It participates in cofactor biosynthesis; pyridoxine 5'-phosphate biosynthesis; pyridoxine 5'-phosphate from D-erythrose 4-phosphate: step 2/5. Functionally, catalyzes the oxidation of erythronate-4-phosphate to 3-hydroxy-2-oxo-4-phosphonooxybutanoate. The polypeptide is Erythronate-4-phosphate dehydrogenase (Shewanella oneidensis (strain ATCC 700550 / JCM 31522 / CIP 106686 / LMG 19005 / NCIMB 14063 / MR-1)).